Consider the following 456-residue polypeptide: Hydroxymethylglutaryl-CoA synthase ERG13 (456 aa).

A (3S)-3-hydroxy-3-methylglutaryl-CoA-binding site is contributed by alanine 35. Glutamate 86 serves as the catalytic Proton donor/acceptor. (3S)-3-hydroxy-3-methylglutaryl-CoA contacts are provided by cysteine 118, asparagine 156, threonine 160, serine 210, histidine 259, lysine 268, asparagine 336, and serine 370. Cysteine 118 functions as the Acyl-thioester intermediate in the catalytic mechanism. Histidine 259 (proton donor/acceptor) is an active-site residue.

This sequence belongs to the thiolase-like superfamily. HMG-CoA synthase family.

The catalysed reaction is acetoacetyl-CoA + acetyl-CoA + H2O = (3S)-3-hydroxy-3-methylglutaryl-CoA + CoA + H(+). It participates in metabolic intermediate biosynthesis; (R)-mevalonate biosynthesis; (R)-mevalonate from acetyl-CoA: step 2/3. In terms of biological role, hydroxymethylglutaryl-CoA synthase; part of the first module of ergosterol biosynthesis pathway that includes the early steps of the pathway, conserved across all eukaryotes, and which results in the formation of mevalonate from acetyl-coenzyme A (acetyl-CoA). ERG13 condenses acetyl-CoA with acetoacetyl-CoA to form hydroxymethylglutaryl-CoA (HMG-CoA). The first module starts with the action of the cytosolic acetyl-CoA acetyltransferase ERG10B that catalyzes the formation of acetoacetyl-CoA. The hydroxymethylglutaryl-CoA synthases ERG13 then condenses acetyl-CoA with acetoacetyl-CoA to form HMG-CoA. The rate-limiting step of the early module is the reduction to mevalonate by the 3-hydroxy-3-methylglutaryl-coenzyme A (HMG-CoA) reductases HMG1. The chain is Hydroxymethylglutaryl-CoA synthase ERG13 from Gibberella zeae (strain ATCC MYA-4620 / CBS 123657 / FGSC 9075 / NRRL 31084 / PH-1) (Wheat head blight fungus).